A 466-amino-acid polypeptide reads, in one-letter code: Tyrosinase HcTyr1 (466 aa).

Cu cation-binding residues include histidine 43, histidine 78, histidine 87, histidine 211, histidine 215, and histidine 238.

Belongs to the tyrosinase family. As to quaternary structure, monomer. Formation of a dimer is observed when the protein is in its holo-form. Cu(2+) serves as cofactor. In terms of processing, in vitro, the C-terminal lid-domain is slowly cleaved off in an autoprocessive time dependent manner, leading to the formation of cleaved-HcTyr1. The processing rate is not influenced by factors such as pH and added metal ions.

It carries out the reaction L-tyrosine + O2 = L-dopaquinone + H2O. It catalyses the reaction 2 L-tyrosine + O2 = 2 L-dopa. The enzyme catalyses 2 L-dopa + O2 = 2 L-dopaquinone + 2 H2O. With respect to regulation, cleavage of the lid-domain increases activity levels, affinity for substrate and turnover rate. Exhibits high saline tolerance. In terms of biological role, copper-containing oxidase that catalyzes the conversion of L-tyrosine to L-dopa and then to L-dopaquinone. Can use various phenols such as p-coumaric acid, phenol, pyrocatechol, syringol or pyrogallol. Accepts several of the constituents of lignin and potentially participates in lignin functionalization. This is Tyrosinase HcTyr1 from Hahella sp. (strain CCB-MM4).